Consider the following 198-residue polypeptide: Pyridoxal 5'-phosphate synthase subunit PdxT (198 aa).

50–52 (GES) is a binding site for L-glutamine. The active-site Nucleophile is the C82. Residues R114 and 143–144 (IR) each bind L-glutamine. Residues H179 and E181 each act as charge relay system in the active site.

This sequence belongs to the glutaminase PdxT/SNO family. In the presence of PdxS, forms a dodecamer of heterodimers. Only shows activity in the heterodimer.

The catalysed reaction is aldehydo-D-ribose 5-phosphate + D-glyceraldehyde 3-phosphate + L-glutamine = pyridoxal 5'-phosphate + L-glutamate + phosphate + 3 H2O + H(+). It carries out the reaction L-glutamine + H2O = L-glutamate + NH4(+). The protein operates within cofactor biosynthesis; pyridoxal 5'-phosphate biosynthesis. Catalyzes the hydrolysis of glutamine to glutamate and ammonia as part of the biosynthesis of pyridoxal 5'-phosphate. The resulting ammonia molecule is channeled to the active site of PdxS. The polypeptide is Pyridoxal 5'-phosphate synthase subunit PdxT (Metallosphaera sedula (strain ATCC 51363 / DSM 5348 / JCM 9185 / NBRC 15509 / TH2)).